Here is a 269-residue protein sequence, read N- to C-terminus: 4-hydroxy-tetrahydrodipicolinate reductase (269 aa).

NAD(+) is bound by residues 8–13 (GAAGRM) and glutamate 34. An NADP(+)-binding site is contributed by arginine 35. Residues 98–100 (GTT) and 122–125 (APNY) contribute to the NAD(+) site. The active-site Proton donor/acceptor is the histidine 155. Histidine 156 lines the (S)-2,3,4,5-tetrahydrodipicolinate pocket. Catalysis depends on lysine 159, which acts as the Proton donor. 165 to 166 (GT) is a binding site for (S)-2,3,4,5-tetrahydrodipicolinate.

Belongs to the DapB family.

It is found in the cytoplasm. The enzyme catalyses (S)-2,3,4,5-tetrahydrodipicolinate + NAD(+) + H2O = (2S,4S)-4-hydroxy-2,3,4,5-tetrahydrodipicolinate + NADH + H(+). It carries out the reaction (S)-2,3,4,5-tetrahydrodipicolinate + NADP(+) + H2O = (2S,4S)-4-hydroxy-2,3,4,5-tetrahydrodipicolinate + NADPH + H(+). The protein operates within amino-acid biosynthesis; L-lysine biosynthesis via DAP pathway; (S)-tetrahydrodipicolinate from L-aspartate: step 4/4. Functionally, catalyzes the conversion of 4-hydroxy-tetrahydrodipicolinate (HTPA) to tetrahydrodipicolinate. This Vibrio cholerae serotype O1 (strain ATCC 39315 / El Tor Inaba N16961) protein is 4-hydroxy-tetrahydrodipicolinate reductase.